The chain runs to 461 residues: Elongation factor 1-alpha (461 aa).

In terms of domain architecture, tr-type G spans 5–242; the sequence is KIHINIVVIG…DAILPPSRPT (238 aa). The segment at 14-21 is G1; the sequence is GHVDSGKS. 14-21 lines the GTP pocket; sequence GHVDSGKS. The tract at residues 70–74 is G2; the sequence is GITID. The tract at residues 91 to 94 is G3; sequence DAPG. Residues 91-95 and 153-156 contribute to the GTP site; these read DAPGH and NKMD. The interval 153 to 156 is G4; that stretch reads NKMD. A G5 region spans residues 194–196; it reads SGW. A 5-glutamyl glycerylphosphorylethanolamine mark is found at Glu301 and Glu374.

This sequence belongs to the TRAFAC class translation factor GTPase superfamily. Classic translation factor GTPase family. EF-Tu/EF-1A subfamily.

It localises to the cytoplasm. This protein promotes the GTP-dependent binding of aminoacyl-tRNA to the A-site of ribosomes during protein biosynthesis. The chain is Elongation factor 1-alpha from Apis mellifera (Honeybee).